A 63-amino-acid polypeptide reads, in one-letter code: Cytochrome c oxidase subunit 7C, mitochondrial (63 aa).

A mitochondrion-targeting transit peptide spans Met1 to Arg16. Topologically, residues Ser17–Asn33 are mitochondrial matrix. The residue at position 25 (Lys25) is an N6-acetyllysine; alternate. At Lys25 the chain carries N6-succinyllysine; alternate. A helical transmembrane segment spans residues Lys34–Leu60. Over Leu61–Lys63 the chain is Mitochondrial intermembrane.

Belongs to the cytochrome c oxidase VIIc family. In terms of assembly, component of the cytochrome c oxidase (complex IV, CIV), a multisubunit enzyme composed of 14 subunits. The complex is composed of a catalytic core of 3 subunits MT-CO1, MT-CO2 and MT-CO3, encoded in the mitochondrial DNA, and 11 supernumerary subunits COX4I1 (or COX4I2), COX5A, COX5B, COX6A2 (or COX6A1), COX6B1 (or COX6B2), COX6C, COX7A1 (or COX7A2), COX7B, COX7C, COX8B and NDUFA4, which are encoded in the nuclear genome. The complex exists as a monomer or a dimer and forms supercomplexes (SCs) in the inner mitochondrial membrane with NADH-ubiquinone oxidoreductase (complex I, CI) and ubiquinol-cytochrome c oxidoreductase (cytochrome b-c1 complex, complex III, CIII), resulting in different assemblies (supercomplex SCI(1)III(2)IV(1) and megacomplex MCI(2)III(2)IV(2)). Interacts with RAB5IF. In terms of tissue distribution, liver, heart, muscle and brain, contain the same isoform of COX VIIc, but at different concentrations.

The protein resides in the mitochondrion inner membrane. It functions in the pathway energy metabolism; oxidative phosphorylation. Its function is as follows. Component of the cytochrome c oxidase, the last enzyme in the mitochondrial electron transport chain which drives oxidative phosphorylation. The respiratory chain contains 3 multisubunit complexes succinate dehydrogenase (complex II, CII), ubiquinol-cytochrome c oxidoreductase (cytochrome b-c1 complex, complex III, CIII) and cytochrome c oxidase (complex IV, CIV), that cooperate to transfer electrons derived from NADH and succinate to molecular oxygen, creating an electrochemical gradient over the inner membrane that drives transmembrane transport and the ATP synthase. Cytochrome c oxidase is the component of the respiratory chain that catalyzes the reduction of oxygen to water. Electrons originating from reduced cytochrome c in the intermembrane space (IMS) are transferred via the dinuclear copper A center (CU(A)) of subunit 2 and heme A of subunit 1 to the active site in subunit 1, a binuclear center (BNC) formed by heme A3 and copper B (CU(B)). The BNC reduces molecular oxygen to 2 water molecules using 4 electrons from cytochrome c in the IMS and 4 protons from the mitochondrial matrix. In Bos taurus (Bovine), this protein is Cytochrome c oxidase subunit 7C, mitochondrial (COX7C).